Reading from the N-terminus, the 401-residue chain is Adaptive-response sensory kinase SasA (401 aa).

The region spanning 175–400 is the Histidine kinase domain; the sequence is MLVHDLRNPL…WFHFTLPVYP (226 aa). H178 carries the phosphohistidine; by autocatalysis modification.

Homooligomerizes. Interacts with KaiC. Participates in the KaiABC clock complex, whose core is composed of a KaiC homohexamer, 6 KaiB and up to 6 KaiA dimers. SasA and KaiB(fs) compete to bind to KaiC.

The enzyme catalyses ATP + protein L-histidine = ADP + protein N-phospho-L-histidine.. Its function is as follows. Member of the two-component regulatory system SasA/RpaA involved in genome-wide circadian gene expression. One of several clock output pathways. Participates in the Kai clock protein complex, the main circadian regulator in cyanobacteria, via its interaction with KaiC. KaiC enhances the autophosphorylation activity of SasA, which then transfers its phosphate group to RpaA to activate it. In addition to its output function, recruits fold-shifted KaiB (KaiB(fs)) to KaiC to cooperatively form the KaiB(6):KaiC(6) complex (independent of SasA kinase activity). Required for robustness of the circadian rhythm of gene expression and is involved in clock output, also required for adaptation to light/dark cycles. The polypeptide is Adaptive-response sensory kinase SasA (Trichormus variabilis (strain ATCC 29413 / PCC 7937) (Anabaena variabilis)).